Consider the following 400-residue polypeptide: Tryptophan synthase beta chain (400 aa).

Lys90 carries the N6-(pyridoxal phosphate)lysine modification.

This sequence belongs to the TrpB family. Tetramer of two alpha and two beta chains. The cofactor is pyridoxal 5'-phosphate.

It carries out the reaction (1S,2R)-1-C-(indol-3-yl)glycerol 3-phosphate + L-serine = D-glyceraldehyde 3-phosphate + L-tryptophan + H2O. The protein operates within amino-acid biosynthesis; L-tryptophan biosynthesis; L-tryptophan from chorismate: step 5/5. Functionally, the beta subunit is responsible for the synthesis of L-tryptophan from indole and L-serine. This chain is Tryptophan synthase beta chain, found in Alkaliphilus metalliredigens (strain QYMF).